Here is a 692-residue protein sequence, read N- to C-terminus: ABC transporter F family member 5 (692 aa).

The segment at 64 to 95 is disordered; the sequence is EIESLFSKQPSQQDSDRKRNGKSSKNGASGIS. Residues 86–95 are compositionally biased toward polar residues; that stretch reads SSKNGASGIS. 2 consecutive ABC transporter domains span residues 98 to 356 and 425 to 640; these read VKLE…ETQN and VNVK…TKEL. ATP contacts are provided by residues 130-137 and 457-464; these read GVNGAGKT and GPNGCGKS. The segment at 644-692 is disordered; the sequence is AELEEKAPKVKAKSKMSKAEKEARKKQKMQAFQQAKQKSKASKNSKRWN. The span at 680-692 shows a compositional bias: basic residues; sequence QKSKASKNSKRWN.

Belongs to the ABC transporter superfamily. ABCF family. EF3 (TC 3.A.1.121) subfamily.

In Arabidopsis thaliana (Mouse-ear cress), this protein is ABC transporter F family member 5 (ABCF5).